Here is a 149-residue protein sequence, read N- to C-terminus: Transcriptional repressor NrdR (149 aa).

The segment at 3–34 (CPFCGANDTKVIDSRLVADGHQVRRRRQCLAC) is a zinc-finger region. Residues 49 to 139 (PRVIKTDGNR…VYRSFEDIRE (91 aa)) enclose the ATP-cone domain.

The protein belongs to the NrdR family. The cofactor is Zn(2+).

Negatively regulates transcription of bacterial ribonucleotide reductase nrd genes and operons by binding to NrdR-boxes. This is Transcriptional repressor NrdR from Photobacterium profundum (strain SS9).